A 778-amino-acid polypeptide reads, in one-letter code: Aerobic respiration control sensor protein ArcB (778 aa).

Residues 1–25 are Cytoplasmic-facing; the sequence is MKQIRLLAQYYVDLMMKLGLVRFSM. Residues 26 to 46 form a helical membrane-spanning segment; sequence LLALALVVLAIVVQMAVTMVL. The Periplasmic portion of the chain corresponds to 47–57; the sequence is HGQVESIDVIR. The helical transmembrane segment at 58–78 threads the bilayer; the sequence is SIFFGLLITPWAVYFLSVVVE. The Cytoplasmic portion of the chain corresponds to 79–778; sequence QLEESRQRLS…KAWVAKATKK (700 aa). The region spanning 153–223 is the PAS domain; that stretch reads QSSFLRSFLD…ETDEKVFRHN (71 aa). A PAC domain is found at 226–278; that stretch reads LTYEQWLDYPDGRKACFEIRKVPYYDRVGKRHGLMGFGRDITERKRYQDALER. The Histidine kinase domain maps to 289–507; sequence TISHELRTPL…TFTLTIHAPS (219 aa). Phosphohistidine; by autocatalysis is present on histidine 292. The region spanning 527–643 is the Response regulatory domain; that stretch reads NVLLVEDIEL…ALTAMIKKFW (117 aa). Aspartate 576 is modified (4-aspartylphosphate). The region spanning 678 to 771 is the HPt domain; that stretch reads GPKLITDGLA…RHDVEVLKAW (94 aa). The residue at position 717 (histidine 717) is a Phosphohistidine.

In terms of processing, activation requires a sequential transfer of a phosphate group from a His in the primary transmitter domain, to an Asp in the receiver domain and to a His in the secondary transmitter domain.

The protein resides in the cell inner membrane. It carries out the reaction ATP + protein L-histidine = ADP + protein N-phospho-L-histidine.. Its function is as follows. Member of the two-component regulatory system ArcB/ArcA. Sensor-regulator protein for anaerobic repression of the arc modulon. Activates ArcA via a four-step phosphorelay. ArcB can also dephosphorylate ArcA by a reverse phosphorelay involving His-717 and Asp-576. This is Aerobic respiration control sensor protein ArcB (arcB) from Escherichia coli O157:H7.